A 264-amino-acid polypeptide reads, in one-letter code: Proteasome subunit beta type-4 (264 aa).

N-acetylmethionine is present on methionine 1. A propeptide spanning residues 1 to 45 (MEAFWESRAGHWAGGPAPGQFYRIPATPSGLMDPASAPCEGPITR) is cleaved from the precursor. Tyrosine 102 bears the Phosphotyrosine mark.

It belongs to the peptidase T1B family. In terms of assembly, the 26S proteasome consists of a 20S proteasome core and two 19S regulatory subunits. The 20S proteasome core is a barrel-shaped complex made of 28 subunits that are arranged in four stacked rings. The two outer rings are each formed by seven alpha subunits, and the two inner rings are formed by seven beta subunits. The proteolytic activity is exerted by three beta-subunits PSMB5, PSMB6 and PSMB7. Forms a ternary complex with SMAD1 and OAZ1 before PSMB4 is incorporated into the 20S proteasome. Interacts with PRPF19. Detected in liver (at protein level).

The protein resides in the cytoplasm. It localises to the nucleus. In terms of biological role, non-catalytic component of the 20S core proteasome complex involved in the proteolytic degradation of most intracellular proteins. This complex plays numerous essential roles within the cell by associating with different regulatory particles. Associated with two 19S regulatory particles, forms the 26S proteasome and thus participates in the ATP-dependent degradation of ubiquitinated proteins. The 26S proteasome plays a key role in the maintenance of protein homeostasis by removing misfolded or damaged proteins that could impair cellular functions, and by removing proteins whose functions are no longer required. Associated with the PA200 or PA28, the 20S proteasome mediates ubiquitin-independent protein degradation. This type of proteolysis is required in several pathways including spermatogenesis (20S-PA200 complex) or generation of a subset of MHC class I-presented antigenic peptides (20S-PA28 complex). SMAD1/OAZ1/PSMB4 complex mediates the degradation of the CREBBP/EP300 repressor SNIP1. In Mus musculus (Mouse), this protein is Proteasome subunit beta type-4 (Psmb4).